The primary structure comprises 150 residues: uncharacterized protein (150 aa).

Residues leucine 5–glycine 66 enclose the HTH asnC-type domain. The H-T-H motif DNA-binding region spans isoleucine 24–lysine 43.

This is an uncharacterized protein from Pyrococcus furiosus (strain ATCC 43587 / DSM 3638 / JCM 8422 / Vc1).